Reading from the N-terminus, the 90-residue chain is Conotoxin TxMMSK-06 (90 aa).

Positions 1-22 are cleaved as a signal peptide; sequence MMSKLGVLLTICLLLFPHTAVP. Residues 23–74 constitute a propeptide that is removed on maturation; it reads LDGDQHADQPAERLQDDISSEHHPMLNSIRRREQNQFMSFTSVKLRDSRGER. The disordered stretch occupies residues 24-43; it reads DGDQHADQPAERLQDDISSE. The span at 25–43 shows a compositional bias: basic and acidic residues; it reads GDQHADQPAERLQDDISSE. Cystine bridges form between Cys75–Cys89, Cys76–Cys85, and Cys81–Cys88. Pro87 bears the 4-hydroxyproline mark. Cys89 bears the Cysteine amide mark.

The protein belongs to the conotoxin M superfamily. As to expression, expressed by the venom duct.

The protein resides in the secreted. The protein is Conotoxin TxMMSK-06 of Conus textile (Cloth-of-gold cone).